The primary structure comprises 168 residues: Vasopressin-neurophysin 2-copeptin (168 aa).

A signal peptide spans 1–23 (MLARMLNTTLSACFLSLLAFSSA). A disulfide bridge connects residues C24 and C29. Glycine amide is present on G32. 7 cysteine pairs are disulfide-bonded: C45–C89, C48–C62, C56–C79, C63–C69, C96–C108, C102–C120, and C109–C114. N135 carries N-linked (GlcNAc...) asparagine glycosylation.

Belongs to the vasopressin/oxytocin family. In terms of assembly, interacts with vasopressin receptors V1bR/AVPR1B (Ki=85 pM), V1aR/AVPR1A (Ki=0.6 nM) and V2R/AVPR2 (Ki=4.9 nM). Interacts with oxytocin receptor (OXTR) (Ki=110 nM).

The protein resides in the secreted. Functionally, neurophysin 2 specifically binds vasopressin. In terms of biological role, vasopressin has a direct antidiuretic action on the kidney, it also causes vasoconstriction of the peripheral vessels. Acts by binding to vasopressin receptors (V1bR/AVPR1B, V1aR/AVPR1A, and V2R/AVPR2). This is Vasopressin-neurophysin 2-copeptin (Avp) from Mus musculus (Mouse).